A 102-amino-acid polypeptide reads, in one-letter code: uncharacterized protein (102 aa).

The segment covering 1–13 (PSSSQALSVPSLS) has biased composition (low complexity). The disordered stretch occupies residues 1–24 (PSSSQALSVPSLSSEKKTASPTCV).

This is an uncharacterized protein from Human cytomegalovirus (strain AD169) (HHV-5).